The primary structure comprises 103 residues: Small ribosomal subunit protein bS18c (103 aa).

It belongs to the bacterial ribosomal protein bS18 family. As to quaternary structure, part of the 30S ribosomal subunit.

The protein resides in the plastid. Its subcellular location is the chloroplast. In Chlorella vulgaris (Green alga), this protein is Small ribosomal subunit protein bS18c (rps18).